A 207-amino-acid chain; its full sequence is Protein ERP4 (207 aa).

Positions 1-21 (MRVFTLIAILFSSSLLTHAFS) are cleaved as a signal peptide. Residues 22–174 (SNYAPVGISL…TVSSTESRLT (153 aa)) are Lumenal-facing. The GOLD domain occupies 36–118 (KECLYYDLSS…PKKVEITLEK (83 aa)). A helical membrane pass occupies residues 175-195 (WLSLLIMGVMVGISIVQALII). Residues 196-207 (QFFFTSRQKNYV) are Cytoplasmic-facing.

It belongs to the EMP24/GP25L family.

Its subcellular location is the endoplasmic reticulum membrane. In terms of biological role, involved in vesicular protein trafficking. The polypeptide is Protein ERP4 (ERP4) (Saccharomyces cerevisiae (strain ATCC 204508 / S288c) (Baker's yeast)).